Here is a 242-residue protein sequence, read N- to C-terminus: tRNA (guanine-N(7)-)-methyltransferase (242 aa).

The S-adenosyl-L-methionine site is built by glutamate 66, glutamate 91, aspartate 118, and aspartate 141. The active site involves aspartate 141. Substrate-binding positions include lysine 145, aspartate 177, and 214 to 217 (TKFE).

The protein belongs to the class I-like SAM-binding methyltransferase superfamily. TrmB family. In terms of assembly, monomer.

It carries out the reaction guanosine(46) in tRNA + S-adenosyl-L-methionine = N(7)-methylguanosine(46) in tRNA + S-adenosyl-L-homocysteine. The protein operates within tRNA modification; N(7)-methylguanine-tRNA biosynthesis. Its function is as follows. Catalyzes the formation of N(7)-methylguanine at position 46 (m7G46) in tRNA. This is tRNA (guanine-N(7)-)-methyltransferase from Buchnera aphidicola subsp. Baizongia pistaciae (strain Bp).